A 79-amino-acid polypeptide reads, in one-letter code: DNA gyrase inhibitor YacG (79 aa).

Cysteine 7, cysteine 10, cysteine 26, and cysteine 30 together coordinate Zn(2+).

This sequence belongs to the DNA gyrase inhibitor YacG family. As to quaternary structure, interacts with GyrB. Zn(2+) serves as cofactor.

Inhibits all the catalytic activities of DNA gyrase by preventing its interaction with DNA. Acts by binding directly to the C-terminal domain of GyrB, which probably disrupts DNA binding by the gyrase. In Shewanella pealeana (strain ATCC 700345 / ANG-SQ1), this protein is DNA gyrase inhibitor YacG.